Here is a 350-residue protein sequence, read N- to C-terminus: GTPase Obg (350 aa).

An Obg domain is found at 1–159 (MKFLDQAKIY…RWIWLRLKLI (159 aa)). Residues 160-328 (ADVGLVGLPN…VLRLLQDRVT (169 aa)) form the OBG-type G domain. Residues 166–173 (GLPNAGKS), 191–195 (FTTLH), 213–216 (DIPG), 280–283 (NKID), and 309–311 (SGV) contribute to the GTP site. The Mg(2+) site is built by serine 173 and threonine 193. The tract at residues 331–350 (REAARDAAPPQAAAGREETA) is disordered.

It belongs to the TRAFAC class OBG-HflX-like GTPase superfamily. OBG GTPase family. As to quaternary structure, monomer. The cofactor is Mg(2+).

Its subcellular location is the cytoplasm. An essential GTPase which binds GTP, GDP and possibly (p)ppGpp with moderate affinity, with high nucleotide exchange rates and a fairly low GTP hydrolysis rate. Plays a role in control of the cell cycle, stress response, ribosome biogenesis and in those bacteria that undergo differentiation, in morphogenesis control. In Gluconacetobacter diazotrophicus (strain ATCC 49037 / DSM 5601 / CCUG 37298 / CIP 103539 / LMG 7603 / PAl5), this protein is GTPase Obg.